The primary structure comprises 166 residues: NADH-quinone oxidoreductase subunit A (166 aa).

Helical transmembrane passes span 16–36 (FAVF…GAYF), 68–88 (FYLV…LYAW), and 98–118 (IGFI…FYLV). The tract at residues 141-166 (RYASSHPQDISQELSVAGSQQANESR) is disordered.

The protein belongs to the complex I subunit 3 family. In terms of assembly, NDH-1 is composed of 13 different subunits. Subunits NuoA, H, J, K, L, M, N constitute the membrane sector of the complex.

It localises to the cell inner membrane. The catalysed reaction is a quinone + NADH + 5 H(+)(in) = a quinol + NAD(+) + 4 H(+)(out). In terms of biological role, NDH-1 shuttles electrons from NADH, via FMN and iron-sulfur (Fe-S) centers, to quinones in the respiratory chain. The immediate electron acceptor for the enzyme in this species is believed to be ubiquinone. Couples the redox reaction to proton translocation (for every two electrons transferred, four hydrogen ions are translocated across the cytoplasmic membrane), and thus conserves the redox energy in a proton gradient. This is NADH-quinone oxidoreductase subunit A from Yersinia pseudotuberculosis serotype IB (strain PB1/+).